We begin with the raw amino-acid sequence, 112 residues long: NADH-quinone oxidoreductase subunit K (112 aa).

3 helical membrane-spanning segments follow: residues 14-34 (LEGY…GALI), 39-59 (VVVF…LVAF), and 76-96 (LIIA…LAIF).

The protein belongs to the complex I subunit 4L family. NDH-1 is composed of 14 different subunits. Subunits NuoA, H, J, K, L, M, N constitute the membrane sector of the complex.

The protein localises to the cell membrane. The enzyme catalyses a quinone + NADH + 5 H(+)(in) = a quinol + NAD(+) + 4 H(+)(out). Functionally, NDH-1 shuttles electrons from NADH, via FMN and iron-sulfur (Fe-S) centers, to quinones in the respiratory chain. The immediate electron acceptor for the enzyme in this species is believed to be a menaquinone. Couples the redox reaction to proton translocation (for every two electrons transferred, four hydrogen ions are translocated across the cytoplasmic membrane), and thus conserves the redox energy in a proton gradient. This is NADH-quinone oxidoreductase subunit K from Rubrobacter xylanophilus (strain DSM 9941 / JCM 11954 / NBRC 16129 / PRD-1).